A 175-amino-acid polypeptide reads, in one-letter code: Nucleoplasmin-3 (175 aa).

Alanine 2 carries the post-translational modification N-acetylalanine. Serine 16 is modified (phosphoserine). Arginine 27 bears the Omega-N-methylarginine mark. Serine 147 and serine 151 each carry phosphoserine.

The protein belongs to the nucleoplasmin family. As to quaternary structure, interacts with NPM (via N-terminus). Forms a pentamer with NPM at a ratio 4:1 (NPM3/NPM). Two pentamers form a decamer. Phosphorylated. As to expression, predominantly expressed in testis.

It is found in the nucleus. It localises to the nucleolus. In terms of biological role, plays a role in the regulation of diverse cellular processes such as ribosome biogenesis, chromatin remodeling or protein chaperoning. Modulates the histone chaperone function and the RNA-binding activity of nucleolar phosphoprotein B23/NPM. Efficiently mediates chromatin remodeling when included in a pentamer containing NPM3 and NPM. The polypeptide is Nucleoplasmin-3 (Npm3) (Mus musculus (Mouse)).